The primary structure comprises 421 residues: UDP-N-acetylglucosamine 1-carboxyvinyltransferase 2 (421 aa).

A phosphoenolpyruvate-binding site is contributed by Lys-22–Asn-23. A UDP-N-acetyl-alpha-D-glucosamine-binding site is contributed by Arg-95. Residue Cys-119 is the Proton donor of the active site. Cys-119 is subject to 2-(S-cysteinyl)pyruvic acid O-phosphothioketal. UDP-N-acetyl-alpha-D-glucosamine is bound by residues Arg-124–Gln-128, Asp-308, and Val-330.

The protein belongs to the EPSP synthase family. MurA subfamily.

The protein resides in the cytoplasm. It catalyses the reaction phosphoenolpyruvate + UDP-N-acetyl-alpha-D-glucosamine = UDP-N-acetyl-3-O-(1-carboxyvinyl)-alpha-D-glucosamine + phosphate. It participates in cell wall biogenesis; peptidoglycan biosynthesis. In terms of biological role, cell wall formation. Adds enolpyruvyl to UDP-N-acetylglucosamine. The protein is UDP-N-acetylglucosamine 1-carboxyvinyltransferase 2 of Staphylococcus saprophyticus subsp. saprophyticus (strain ATCC 15305 / DSM 20229 / NCIMB 8711 / NCTC 7292 / S-41).